Consider the following 577-residue polypeptide: Signal peptide peptidase-like 2B (577 aa).

The N-terminal stretch at 1–19 is a signal peptide; that stretch reads MAAARLAASLLLLAAQVAC. Over 20–168 the chain is Lumenal; sequence EFGVLRVVPQ…APSEPVMDYN (149 aa). Positions 49 to 149 constitute a PA domain; sequence LPHDLNKVSL…RDLQDIFRRF (101 aa). An N-linked (GlcNAc...) asparagine glycan is attached at Asn-91. A helical transmembrane segment spans residues 169–189; the sequence is MVIIFIMAVGTVALGGYWAGS. Topologically, residues 190 to 216 are cytoplasmic; it reads HDVKKYMKHKRDDVPEKQEDEAVDVTP. The helical transmembrane segment at 217–237 threads the bilayer; it reads VMICVFVVMCCFMLVLLYYFY. Residues 238-239 are Lumenal-facing; sequence DR. Residues 240 to 260 traverse the membrane as a helical segment; that stretch reads LVYVIIGIFCLASSTGLYSCL. At 261–286 the chain is on the cytoplasmic side; the sequence is APCVRKLPFCTCRVPDNNLPYFHKRP. A helical transmembrane segment spans residues 287-307; sequence QARMLLLALFCVTVSVVWGVF. At 308 to 312 the chain is on the lumenal side; the sequence is RNEDQ. A helical transmembrane segment spans residues 313–333; the sequence is WAWVLQDTLGIAFCLYMLRTI. Topologically, residues 334 to 341 are cytoplasmic; sequence RLPTFKAC. The chain crosses the membrane as a helical span at residues 342–362; the sequence is TLLLLVLFVYDIFFVFITPYL. Asp-352 is an active-site residue. At 363–405 the chain is on the lumenal side; the sequence is TKSGNSIMVEVATGPSNSSTHEKLPMVLKVPRLNTSPLSLCDR. The helical transmembrane segment at 406-426 threads the bilayer; sequence PFSLLGFGDILVPGLLVAYCH. Residue Asp-414 is part of the active site. Residues 427–438 lie on the Cytoplasmic side of the membrane; it reads RFDIQVQSSRIY. The chain crosses the membrane as a helical span at residues 439-459; that stretch reads FVACTIAYGLGLLVTFVALVL. Over 460–463 the chain is Lumenal; sequence MRHG. Residues 464–484 form a helical membrane-spanning segment; it reads QPALLYLVPCTLLTSCTVALW. Positions 465 to 467 match the PAL motif; the sequence is PAL. The Cytoplasmic segment spans residues 485 to 577; the sequence is RREMGAFWTG…IPVVTPGTSA (93 aa). Residues 502–577 form a disordered region; that stretch reads QTPWAAPQGP…IPVVTPGTSA (76 aa).

This sequence belongs to the peptidase A22B family. As to quaternary structure, monomer. Homodimer. Interacts with ITM2B and TNF. Glycosylated.

The protein resides in the cell membrane. It localises to the golgi apparatus membrane. Its subcellular location is the lysosome membrane. It is found in the endosome membrane. The protein localises to the membrane. Intramembrane-cleaving aspartic protease (I-CLiP) that cleaves type II membrane signal peptides in the hydrophobic plane of the membrane. Functions in ITM2B and TNF processing. Catalyzes the intramembrane cleavage of the anchored fragment of shed TNF-alpha (TNF), which promotes the release of the intracellular domain (ICD) for signaling to the nucleus. May play a role in the regulation of innate and adaptive immunity. The chain is Signal peptide peptidase-like 2B from Rattus norvegicus (Rat).